The following is a 1153-amino-acid chain: Bifunctional dioxygenase (DOX)-epoxy alcohol synthase (EAS) (1153 aa).

Low complexity predominate over residues 46–56; it reads SSKESPSRKSS. The disordered stretch occupies residues 46–113; sequence SSKESPSRKS…TQHGDGTYPT (68 aa). Polar residues predominate over residues 57–74; sequence TIGQSTRNGSCQADTQKG. The segment covering 81–98 has biased composition (basic and acidic residues); that stretch reads EKPKPVKENPMKKLKEMS. Residues 177–525 are fatty acid alpha-dioxygenase; it reads TDSLINELWE…DGKFDDDDLV (349 aa). His276 serves as a coordination point for heme b. Residue Tyr454 is part of the active site. His457 contacts heme b. The segment at 732–1153 is epoxy alcohol synthase; sequence RVNITSYGGA…VTMRVMWDDE (422 aa). Cys1086 is a heme binding site.

The protein in the N-terminal section; belongs to the peroxidase family. This sequence in the C-terminal section; belongs to the cytochrome P450 family. As to quaternary structure, homotetramer. Heme b is required as a cofactor. The cofactor is heme.

It catalyses the reaction (9Z)-octadecenoate + O2 = (8R)-hydroperoxy-(9Z)-octadecenoate. The enzyme catalyses (9Z)-octadecenoate + O2 = 10-hydroperoxy-(8E)-octadecenoate. The catalysed reaction is (9Z,12Z)-octadecadienoate + O2 = (8E,10R,12Z)-10-hydroperoxyoctadeca-8,12-dienoate. It carries out the reaction (9Z,12Z,15Z)-octadecatrienoate + O2 = (10R)-hydroperoxy-(8E,12Z,15Z)-octadecatrienoate. It catalyses the reaction (9Z,12Z,15Z)-octadecatrienoate + O2 = (8R)-hydroperoxy-(9Z,12Z,15Z)-octadecatrienoate. The enzyme catalyses (11Z,14Z)-eicosadienoate + O2 = 12-hydroperoxy-(10E,14Z)-eicosadienoate. The catalysed reaction is (11Z,14Z,17Z)-eicosatrienoate + O2 = 12-hydroperoxy-(10E,14Z,17Z)-eicosatrienoate. It carries out the reaction (12R,13S)-epoxy-(9Z)-octadecenoate + O2 = (12R,13S)-epoxy-(10R)-hydroperoxy-(8E)-octadecenoate. It catalyses the reaction (8E,10R,12Z)-10-hydroperoxyoctadeca-8,12-dienoate = (12S,13R)-epoxy-(10R)-hydroxy-(8E)-octadecenoate. The enzyme catalyses (10R)-hydroperoxy-(8E,12Z,15Z)-octadecatrienoate = 12,13-epoxy-(10R)-hydroxy-(8E,15Z)-octadecadienoate. The catalysed reaction is 12-hydroperoxy-(10E,14Z)-eicosadienoate = 10,11-epoxy-12-hydroxy-(14Z)-eicosenoate. It carries out the reaction 12-hydroperoxy-(10E,14Z,17Z)-eicosatrienoate = 14,15-epoxy-12-hydroxy-(10E,17Z)-eicosadienoate. It catalyses the reaction (13R)-hydroperoxy-(9Z,11E)-octadecadienoate = (12R,13R)-epoxy-(11S)-hydroxy-(9Z)-octadecenoate. The enzyme catalyses (13S)-hydroperoxy-(9Z,11E)-octadecadienoate = (12R,13R)-epoxy-(11S)-hydroxy-(9Z)-octadecenoate. The catalysed reaction is 12-hydroperoxy-(10E,14Z)-eicosadienoate = 14,15-epoxy-12-hydroxy-(10E)-eicosenoate. It carries out the reaction 12-hydroperoxy-(10E,14Z,17Z)-eicosatrienoate = 10,11-epoxy-12-hydroxy-(14Z,17Z)-eicosadienoate. Functionally, bifunctional dioxygenase (DOX)-epoxy alcohol synthase (EAS) that converts linoleic acid (18:2n-6) sequentially to 10(R)-hydroperoxy-8(E),12(Z)-octadecadienoic acid (10R-HPODE) and 10R-HPODE further to 12 S(13R)-epoxy-10(R)-hydroxy-8(E)-octadecenoic acid as the end product. Oxygenation at C-10 occurs by retention of the pro-R hydrogen of C-8 of 18:2n-6, suggesting antarafacial hydrogen abstraction and oxygenation. The epoxy alcohol is formed from 10R-HPODE, likely by heterolytic cleavage of the dioxygen bond and subsequent intramolecular epoxidation of the 12(Z) double bond. The DOX domain is also able to oxygenate position C-8 of linoleic acid to produce 8(R)-hydroperoxy-8(E),12(Z)-octadecadienoic acid (8R-HPODE). Moreover, the DOX domain can oxygenate alpha-linolenic acid (18:3n-3) at C-8 or C-10 to produce respectively 8HOTrE and 10HOTrE, oleic acid (18:1n-9) at C-8 or C-10 to produce respectively 8-H(P)OME and 10-H(P)OME (with 8R stereoisomer to over 95%), eicosadienoic acid (20:2n-6) at C-10 or C-12 to produce respectively 10(11)-epoxy-12-hydroxy-14(Z)-eicosenoic acid and 14(15)-epoxy-12-hydroxy-10(E)-eicosenoic acid, as well as eicosatrienoic acid (20:3n-3) at C-10 or C-12 to produce respectively 10(11)-epoxy-12-hydroxy-14(Z),17(Z)-eicosadienoic acid and 14(15)-epoxy-12-hydroxy-14(Z),17(Z)-eicosadienoic acid. On the other side, the enzyme EAS domain can also catalyze the conversion of 10HOTrE into 12(13)-epoxy-10(R)-hydroxy-8(E),15(Z)-octadecadienoic acid, 13-R-HPODE into the stereoisomers of 12(13)-epoxy-11-hydroxy-9(Z)-octadecenoic acids (erythro/threo, 1:4), as well as 13S-HPODE into the stereoisomers of 12(13)-epoxy-11-hydroxy-9(Z)-octadecenoic acids (erythro/threo, 1:4) (EAS activity). Gamma-linolenic acid (18:3n-6) is not a substrate. This chain is Bifunctional dioxygenase (DOX)-epoxy alcohol synthase (EAS), found in Pyricularia oryzae (strain 70-15 / ATCC MYA-4617 / FGSC 8958) (Rice blast fungus).